The sequence spans 472 residues: Acetyl-CoA decarbonylase/synthase complex subunit beta 2 (472 aa).

Positions 189, 192, 278, and 280 each coordinate [Ni-Fe-S] cluster.

Belongs to the CdhC family. As to quaternary structure, monomer. The ACDS complex is made up of alpha, epsilon, beta, gamma and delta chains with a probable stoichiometry of (alpha(2)epsilon(2))(4)-beta(8)-(gamma(1)delta(1))(8) (Potential). [Ni-Fe-S] cluster serves as cofactor.

It catalyses the reaction Co(I)-[corrinoid Fe-S protein] + acetyl-CoA + H(+) = methyl-Co(III)-[corrinoid Fe-S protein] + CO + CoA. It functions in the pathway one-carbon metabolism; methanogenesis from acetate. Its function is as follows. Part of a complex that catalyzes the reversible cleavage of acetyl-CoA, allowing growth on acetate as sole source of carbon and energy. The alpha-epsilon complex generates CO from CO(2), while the beta subunit (this protein) combines the CO with CoA and a methyl group to form acetyl-CoA. The methyl group, which is incorporated into acetyl-CoA, is transferred to the beta subunit by a corrinoid iron-sulfur protein (the gamma-delta complex). This chain is Acetyl-CoA decarbonylase/synthase complex subunit beta 2 (cdhC2), found in Methanosarcina thermophila.